The chain runs to 185 residues: Lipid A acyltransferase PagP (185 aa).

The first 24 residues, 1–24 (MKTHNDILAALAALPLFLTGAAFA), serve as a signal peptide directing secretion. Active-site residues include histidine 57, aspartate 100, and serine 101.

The protein belongs to the lipid A palmitoyltransferase family. In terms of assembly, homodimer.

Its subcellular location is the cell outer membrane. The catalysed reaction is a lipid A + a 1,2-diacyl-sn-glycero-3-phosphocholine = a hepta-acyl lipid A + a 2-acyl-sn-glycero-3-phosphocholine. It carries out the reaction a lipid IVA + a 1,2-diacyl-sn-glycero-3-phosphocholine = a lipid IVB + a 2-acyl-sn-glycero-3-phosphocholine. It catalyses the reaction a lipid IIA + a 1,2-diacyl-sn-glycero-3-phosphocholine = a lipid IIB + a 2-acyl-sn-glycero-3-phosphocholine. Its function is as follows. Transfers a fatty acid residue from the sn-1 position of a phospholipid to the N-linked hydroxyfatty acid chain on the proximal unit of lipid A or its precursors. The chain is Lipid A acyltransferase PagP from Edwardsiella tarda (strain FL6-60).